Here is a 466-residue protein sequence, read N- to C-terminus: UDP-N-acetylmuramate--L-alanine ligase (466 aa).

ATP is bound at residue 117-123 (GTHGKTT).

Belongs to the MurCDEF family.

Its subcellular location is the cytoplasm. The enzyme catalyses UDP-N-acetyl-alpha-D-muramate + L-alanine + ATP = UDP-N-acetyl-alpha-D-muramoyl-L-alanine + ADP + phosphate + H(+). It participates in cell wall biogenesis; peptidoglycan biosynthesis. Its function is as follows. Cell wall formation. The polypeptide is UDP-N-acetylmuramate--L-alanine ligase (Streptomyces griseus subsp. griseus (strain JCM 4626 / CBS 651.72 / NBRC 13350 / KCC S-0626 / ISP 5235)).